Here is a 218-residue protein sequence, read N- to C-terminus: Probable transaldolase (218 aa).

Catalysis depends on Lys-84, which acts as the Schiff-base intermediate with substrate.

This sequence belongs to the transaldolase family. Type 3B subfamily.

Its subcellular location is the cytoplasm. It catalyses the reaction D-sedoheptulose 7-phosphate + D-glyceraldehyde 3-phosphate = D-erythrose 4-phosphate + beta-D-fructose 6-phosphate. Its pathway is carbohydrate degradation; pentose phosphate pathway; D-glyceraldehyde 3-phosphate and beta-D-fructose 6-phosphate from D-ribose 5-phosphate and D-xylulose 5-phosphate (non-oxidative stage): step 2/3. Its function is as follows. Transaldolase is important for the balance of metabolites in the pentose-phosphate pathway. This is Probable transaldolase from Bartonella henselae (strain ATCC 49882 / DSM 28221 / CCUG 30454 / Houston 1) (Rochalimaea henselae).